A 126-amino-acid polypeptide reads, in one-letter code: uncharacterized protein (126 aa).

The disordered stretch occupies residues 1–101; the sequence is MQASSEPANV…KSVGSQSADE (101 aa). 2 stretches are compositionally biased toward polar residues: residues 14–27 and 86–99; these read GQNQ…STSP and DTEA…SQSA.

This is an uncharacterized protein from Schizosaccharomyces pombe (strain 972 / ATCC 24843) (Fission yeast).